The sequence spans 547 residues: GMP synthase [glutamine-hydrolyzing] (547 aa).

Residues 12–210 (KVLILDFGSQ…VLEIAGAKPD (199 aa)) form the Glutamine amidotransferase type-1 domain. The active-site Nucleophile is the Cys89. Active-site residues include His184 and Glu186. Positions 211 to 403 (WIMRDHIEEA…LGLPPEMVYR (193 aa)) constitute a GMPS ATP-PPase domain. Position 238 to 244 (238 to 244 (SGGVDSS)) interacts with ATP.

Homodimer.

It carries out the reaction XMP + L-glutamine + ATP + H2O = GMP + L-glutamate + AMP + diphosphate + 2 H(+). The protein operates within purine metabolism; GMP biosynthesis; GMP from XMP (L-Gln route): step 1/1. Functionally, catalyzes the synthesis of GMP from XMP. This is GMP synthase [glutamine-hydrolyzing] from Ralstonia nicotianae (strain ATCC BAA-1114 / GMI1000) (Ralstonia solanacearum).